We begin with the raw amino-acid sequence, 185 residues long: Large ribosomal subunit protein uL22 (185 aa).

It belongs to the universal ribosomal protein uL22 family. As to quaternary structure, part of the 50S ribosomal subunit.

In terms of biological role, this protein binds specifically to 23S rRNA. It makes multiple contacts with different domains of the 23S rRNA in the assembled 50S subunit and ribosome. The globular domain of the protein is located near the polypeptide exit tunnel on the outside of the subunit, while an extended beta-hairpin is found that lines the wall of the exit tunnel in the center of the 70S ribosome. This Pyrobaculum aerophilum (strain ATCC 51768 / DSM 7523 / JCM 9630 / CIP 104966 / NBRC 100827 / IM2) protein is Large ribosomal subunit protein uL22.